Reading from the N-terminus, the 35-residue chain is Photosystem II reaction center protein T (35 aa).

A helical membrane pass occupies residues 3 to 23 (ALVYTFLLVSTLGIIFFAIFF).

It belongs to the PsbT family. As to quaternary structure, PSII is composed of 1 copy each of membrane proteins PsbA, PsbB, PsbC, PsbD, PsbE, PsbF, PsbH, PsbI, PsbJ, PsbK, PsbL, PsbM, PsbT, PsbY, PsbZ, Psb30/Ycf12, at least 3 peripheral proteins of the oxygen-evolving complex and a large number of cofactors. It forms dimeric complexes.

The protein localises to the plastid. The protein resides in the chloroplast thylakoid membrane. Found at the monomer-monomer interface of the photosystem II (PS II) dimer, plays a role in assembly and dimerization of PSII. PSII is a light-driven water plastoquinone oxidoreductase, using light energy to abstract electrons from H(2)O, generating a proton gradient subsequently used for ATP formation. This Taxus brevifolia (Pacific yew) protein is Photosystem II reaction center protein T.